Here is a 277-residue protein sequence, read N- to C-terminus: Type II restriction enzyme EcoRI (277 aa).

Residues aspartate 91, glutamate 111, and lysine 113 contribute to the active site. Positions 91 and 111 each coordinate Mg(2+).

It belongs to the EcoRI type II restriction endonuclease family. As to quaternary structure, homodimer. Requires Mg(2+) as cofactor.

The catalysed reaction is Endonucleolytic cleavage of DNA to give specific double-stranded fragments with terminal 5'-phosphates.. A P subtype restriction enzyme that recognizes the double-stranded sequence 5'-GAATTC-3' and cleaves after G-1. The chain is Type II restriction enzyme EcoRI (ecoRIR) from Escherichia coli.